Consider the following 544-residue polypeptide: Matrilin-1 (544 aa).

Residues 1–26 (MRALSGPRLMLCGLLLLLFQAPCALG) form the signal peptide. Positions 42–217 (DLVFVVDSSR…SVIEKLSKKF (176 aa)) constitute a VWFA 1 domain. The N-linked (GlcNAc...) asparagine glycan is linked to Asn77. The EGF-like domain maps to 224–264 (VSDLCATGDHDCEQVCVSSPGSYTCACREGFTLNSDGKTCN). 3 disulfides stabilise this stretch: Cys228-Cys239, Cys235-Cys248, and Cys250-Cys263. The region spanning 276-448 (DLVFLIDGSK…KTINQIGKKL (173 aa)) is the VWFA 2 domain. Residue Asn345 is glycosylated (N-linked (GlcNAc...) asparagine).

Homotrimer. Part of a complex composed of MATN1 (via VWFA1 domain), type 2 collagens and type 6 collagens. Forms a complex (via covalent bonds) with ACAN; the interaction increases in abundance with increasing age of the organism via an increase in occupancy of MATN1 binding sites. Interacts with COMP. Post-translationally, N-glycosylated; reduces binding affinity for type 2 collagens. Expressed in trachea from fetus into adulthood (at protein level).

It localises to the secreted. Its subcellular location is the extracellular space. The protein resides in the extracellular matrix. In terms of biological role, a major component of the extracellular matrix of non-articular cartilage. Binds to type 2 collagens and forms long concatenated protein networks as part of the extracellular matrix. Required for the network-like organization and bundling of collagen fibrils surrounding chondrocytes in the zones of maturation and hypertrophy. Required for mechanotransduction and adaption to mechanical loading in cartilage chondrocytes, resulting in an increase in expression of the extracellular matrix components ACAN and COL2A1. Acts as a moderator of angiogenesis in response to injury. This is Matrilin-1 from Bos taurus (Bovine).